A 248-amino-acid polypeptide reads, in one-letter code: Triosephosphate isomerase (248 aa).

Residue 9-11 (NWK) participates in substrate binding. His-94 acts as the Electrophile in catalysis. Glu-166 functions as the Proton acceptor in the catalytic mechanism. Substrate is bound by residues Gly-172, Ser-212, and 233-234 (GG).

It belongs to the triosephosphate isomerase family. Homodimer.

It localises to the cytoplasm. The catalysed reaction is D-glyceraldehyde 3-phosphate = dihydroxyacetone phosphate. It functions in the pathway carbohydrate biosynthesis; gluconeogenesis. The protein operates within carbohydrate degradation; glycolysis; D-glyceraldehyde 3-phosphate from glycerone phosphate: step 1/1. Involved in the gluconeogenesis. Catalyzes stereospecifically the conversion of dihydroxyacetone phosphate (DHAP) to D-glyceraldehyde-3-phosphate (G3P). This Clostridium botulinum (strain ATCC 19397 / Type A) protein is Triosephosphate isomerase.